The primary structure comprises 147 residues: Large ribosomal subunit protein uL15 (147 aa).

A compositionally biased stretch (basic and acidic residues) spans 1–12; the sequence is MTLRLNDLKPAD. The interval 1 to 61 is disordered; it reads MTLRLNDLKP…GFEGGQTPMQ (61 aa). The segment covering 23-33 has biased composition (gly residues); it reads RGIGSGLGKTA. The segment covering 34–47 has biased composition (basic residues); sequence GRGHKGSFARKGGG.

This sequence belongs to the universal ribosomal protein uL15 family. As to quaternary structure, part of the 50S ribosomal subunit.

Binds to the 23S rRNA. This Xanthomonas oryzae pv. oryzae (strain MAFF 311018) protein is Large ribosomal subunit protein uL15.